Reading from the N-terminus, the 1065-residue chain is Valine--tRNA ligase, mitochondrial (1065 aa).

A mitochondrion-targeting transit peptide spans 1 to 15 (MPHLPLASFRPPLWG). The segment at 27–52 (ALCTQPEPHGSPVSRRNREAKQKRLR) is disordered. Residues 42–52 (RNREAKQKRLR) are compositionally biased toward basic and acidic residues. Positions 146–156 (PNVTGSLHIGH) match the 'HIGH' region motif. Residues 659–663 (KMSKS) carry the 'KMSKS' region motif. Position 662 (Lys662) interacts with ATP.

It belongs to the class-I aminoacyl-tRNA synthetase family.

Its subcellular location is the mitochondrion. It carries out the reaction tRNA(Val) + L-valine + ATP = L-valyl-tRNA(Val) + AMP + diphosphate. In terms of biological role, catalyzes the attachment of valine to tRNA(Val) in a two-step reaction: valine is first activated by ATP to form Val-AMP and then transferred to the acceptor end of tRNA(Val). The sequence is that of Valine--tRNA ligase, mitochondrial (Vars2) from Rattus norvegicus (Rat).